The primary structure comprises 499 residues: Lysine--tRNA ligase (499 aa).

Positions 409 and 416 each coordinate Mg(2+).

This sequence belongs to the class-II aminoacyl-tRNA synthetase family. Homodimer. Requires Mg(2+) as cofactor.

It is found in the cytoplasm. It catalyses the reaction tRNA(Lys) + L-lysine + ATP = L-lysyl-tRNA(Lys) + AMP + diphosphate. In Thioalkalivibrio sulfidiphilus (strain HL-EbGR7), this protein is Lysine--tRNA ligase.